A 486-amino-acid polypeptide reads, in one-letter code: MVQLNQNFINSIAKDMPDHLSMDEFISYCAKPLRPSIRVNTLKITTADFITMMNAKGWQFEPVPWCEDGFWVKVDDSVQLGNTVEHIQGLFYIQEASSMLPPKALFPEPIEDATSLTLLDMASAPGSKTTQLAAMMNNQGLLVANEYSSSRVKVLHANVQRMGASNLALTHFDARVFGKYLFESFDAILLDAPCGGEGTVRKDPDALKHWDESEIEAIASVQRDLIESAFLALKPGGSLVYSTCTLNRRENQDVCLHLKATYGDAVQFESLAGLFPGAEKASTSEGFLHVWPQIFDSEGFFIAKLTKIAAVPRNSEEPRKQKNFPFTPIDKKSRQALCDYFDTSFGIKLDGQGILMQRDDEFWLFPTNVDPLIGKIRFQRIGLKLADALKKGFKPRHEAVMALADRLRGIPLDEAQAIQYLMGRDIALTSKEKPQGERLVSYQGAHLGLVKHLGNKLKNSLPRDLVRDKICSSSAMAVDQQATGED.

S-adenosyl-L-methionine contacts are provided by residues 122-128 (ASAPGSK), Glu146, Asp173, and Asp191. Cys244 functions as the Nucleophile in the catalytic mechanism.

This sequence belongs to the class I-like SAM-binding methyltransferase superfamily. RsmB/NOP family.

It localises to the cytoplasm. It carries out the reaction cytidine(1407) in 16S rRNA + S-adenosyl-L-methionine = 5-methylcytidine(1407) in 16S rRNA + S-adenosyl-L-homocysteine + H(+). Functionally, specifically methylates the cytosine at position 1407 (m5C1407) of 16S rRNA. This is Ribosomal RNA small subunit methyltransferase F from Shewanella loihica (strain ATCC BAA-1088 / PV-4).